The chain runs to 433 residues: Zuotin (433 aa).

The residue at position 50 (Ser-50) is a Phosphoserine. The region spanning Leu-98–Val-170 is the J domain. Positions Glu-292–Ala-330 are enriched in basic and acidic residues. A disordered region spans residues Glu-292–Ala-357.

RAC is a heterodimer of the Hsp70/DnaK-type chaperone SSZ1 and the Hsp40/DnaJ-type chaperone ZUO1. RAC associates with ribosomes via ZUO1.

The protein resides in the cytoplasm. Functionally, component of the ribosome-associated complex (RAC), a heterodimeric chaperone complex involved in regulation of accurate translation termination and in folding or maintaining nascent polypeptides in a folding-competent state. RAC stimulates the ATPase activity of the ribosome-associated pool of Hsp70-type chaperones SSB1/SSB2 that bind to the nascent polypeptide chain. ZUO1 can act as a J-protein for SSB1/SSB2 only when associated with SSZ1. This is Zuotin (ZUO1) from Saccharomyces cerevisiae (strain ATCC 204508 / S288c) (Baker's yeast).